The sequence spans 454 residues: Guanine deaminase (454 aa).

Residues His-82 and His-84 each coordinate Zn(2+). Substrate is bound by residues 84-87, 213-214, 240-243, and Asp-330; these read HASQ, RF, and HISE. Residues His-240 and Asp-330 each coordinate Zn(2+). Ser-453 is subject to Phosphoserine.

This sequence belongs to the metallo-dependent hydrolases superfamily. ATZ/TRZ family. In terms of assembly, homodimer. Zn(2+) is required as a cofactor.

The catalysed reaction is guanine + H2O + H(+) = xanthine + NH4(+). It functions in the pathway purine metabolism; guanine degradation; xanthine from guanine: step 1/1. Catalyzes the hydrolytic deamination of guanine, producing xanthine and ammonia. This chain is Guanine deaminase, found in Homo sapiens (Human).